A 364-amino-acid chain; its full sequence is Aminomethyltransferase (364 aa).

The protein belongs to the GcvT family. In terms of assembly, the glycine cleavage system is composed of four proteins: P, T, L and H.

It catalyses the reaction N(6)-[(R)-S(8)-aminomethyldihydrolipoyl]-L-lysyl-[protein] + (6S)-5,6,7,8-tetrahydrofolate = N(6)-[(R)-dihydrolipoyl]-L-lysyl-[protein] + (6R)-5,10-methylene-5,6,7,8-tetrahydrofolate + NH4(+). The glycine cleavage system catalyzes the degradation of glycine. The sequence is that of Aminomethyltransferase from Salmonella paratyphi A (strain AKU_12601).